The primary structure comprises 1131 residues: Plasma membrane ATPase (1131 aa).

A run of 6 helical transmembrane segments spans residues 77–97 (PVLV…EAAA), 98–118 (IISI…LLLI), 151–171 (GAIV…LIRL), 231–251 (AVVY…LISG), 265–285 (MSAI…AVQF), and 305–325 (MLVV…SVTL). The active-site 4-aspartylphosphate intermediate is Asp-357. Mg(2+) is bound by residues Asp-615 and Asp-619. Transmembrane regions (helical) follow at residues 642-662 (AADI…VIGA), 689-709 (LITV…MAVF), 733-753 (ITNI…STWA), 884-904 (LAFF…LGGF), and 946-966 (VIGC…WYVL). Basic and acidic residues predominate over residues 994 to 1010 (KRSLDRRSKDDIGDKEF). Disordered regions lie at residues 994-1023 (KRSL…NYSN) and 1067-1131 (RRSM…TIRE). Over residues 1089–1100 (SRTSNTLSTGSK) the composition is skewed to polar residues. Basic and acidic residues predominate over residues 1118-1131 (IKPDKYDFASTIRE).

This sequence belongs to the cation transport ATPase (P-type) (TC 3.A.3) family. Type IIIA subfamily.

It is found in the cell membrane. It catalyses the reaction ATP + H2O + H(+)(in) = ADP + phosphate + 2 H(+)(out). In terms of biological role, the plasma membrane ATPase of plants and fungi is a hydrogen ion pump. The proton gradient it generates drives the active transport of nutrients by H(+)-symport. The resulting external acidification and/or internal alkinization may mediate growth responses. This chain is Plasma membrane ATPase (PMA1), found in Dunaliella bioculata (Green alga).